A 465-amino-acid chain; its full sequence is Ribulose bisphosphate carboxylase large chain (465 aa).

Residue Lys4 is modified to N6,N6,N6-trimethyllysine. Substrate-binding residues include Asn113 and Thr163. Lys165 acts as the Proton acceptor in catalysis. Substrate is bound at residue Lys167. Mg(2+)-binding residues include Lys191, Asp193, and Glu194. At Lys191 the chain carries N6-carboxylysine. Residue His284 is the Proton acceptor of the active site. Residues Arg285, His317, and Ser369 each coordinate substrate.

The protein belongs to the RuBisCO large chain family. Type I subfamily. In terms of assembly, heterohexadecamer of 8 large chains and 8 small chains; disulfide-linked. The disulfide link is formed within the large subunit homodimers. It depends on Mg(2+) as a cofactor. Post-translationally, the disulfide bond which can form in the large chain dimeric partners within the hexadecamer appears to be associated with oxidative stress and protein turnover.

The protein localises to the plastid. It localises to the chloroplast. It catalyses the reaction 2 (2R)-3-phosphoglycerate + 2 H(+) = D-ribulose 1,5-bisphosphate + CO2 + H2O. The catalysed reaction is D-ribulose 1,5-bisphosphate + O2 = 2-phosphoglycolate + (2R)-3-phosphoglycerate + 2 H(+). RuBisCO catalyzes two reactions: the carboxylation of D-ribulose 1,5-bisphosphate, the primary event in carbon dioxide fixation, as well as the oxidative fragmentation of the pentose substrate in the photorespiration process. Both reactions occur simultaneously and in competition at the same active site. The polypeptide is Ribulose bisphosphate carboxylase large chain (Cornus oblonga).